The sequence spans 359 residues: Phospho-N-acetylmuramoyl-pentapeptide-transferase (359 aa).

10 helical membrane passes run 3–23, 55–75, 84–104, 117–137, 156–176, 190–210, 231–251, 255–275, 283–303, and 330–350; these read QILI…PVLI, VAII…GVLM, GLLV…DDLI, TAKT…ALQF, IATV…VVSA, LAAG…FWQF, LAII…WNAA, IFMG…LSVT, VVLG…ILAF, and VIIR…ALFY.

It belongs to the glycosyltransferase 4 family. MraY subfamily. Mg(2+) serves as cofactor.

It is found in the cell membrane. The catalysed reaction is UDP-N-acetyl-alpha-D-muramoyl-L-alanyl-gamma-D-glutamyl-meso-2,6-diaminopimeloyl-D-alanyl-D-alanine + di-trans,octa-cis-undecaprenyl phosphate = di-trans,octa-cis-undecaprenyl diphospho-N-acetyl-alpha-D-muramoyl-L-alanyl-D-glutamyl-meso-2,6-diaminopimeloyl-D-alanyl-D-alanine + UMP. The protein operates within cell wall biogenesis; peptidoglycan biosynthesis. In terms of biological role, catalyzes the initial step of the lipid cycle reactions in the biosynthesis of the cell wall peptidoglycan: transfers peptidoglycan precursor phospho-MurNAc-pentapeptide from UDP-MurNAc-pentapeptide onto the lipid carrier undecaprenyl phosphate, yielding undecaprenyl-pyrophosphoryl-MurNAc-pentapeptide, known as lipid I. This Mycolicibacterium gilvum (strain PYR-GCK) (Mycobacterium gilvum (strain PYR-GCK)) protein is Phospho-N-acetylmuramoyl-pentapeptide-transferase.